Here is a 431-residue protein sequence, read N- to C-terminus: F-box/kelch-repeat protein At4g19930 (431 aa).

One can recognise an F-box domain in the interval 37 to 83 (HEPMPYIPFDLVIEILTRLPAKSLMRFKSVSKLWSSLICSRTFTNRL). Kelch repeat units lie at residues 143 to 189 (LSHV…KNKK) and 227 to 275 (WVFI…PMLV).

The protein is F-box/kelch-repeat protein At4g19930 of Arabidopsis thaliana (Mouse-ear cress).